Reading from the N-terminus, the 512-residue chain is uncharacterized protein (512 aa).

Transmembrane regions (helical) follow at residues 25–45 (GFYT…VICA), 55–75 (LLYP…PLIL), 96–116 (LVVC…VFLA), 123–143 (VVTG…LPAV), 148–168 (LLLT…LVIV), 183–203 (LLWL…FVGP), 238–258 (MTTY…SLRA), 263–283 (GSLH…SMLW), 294–314 (GLLL…MVAE), 329–349 (FLLA…WISV), 359–379 (LICV…VALG), and 386–406 (ATIW…VASL). The tract at residues 428–512 (YRPATPNPIH…APLDAGQRIA (85 aa)) is disordered.

It is found in the cell membrane. This is an uncharacterized protein from Mycobacterium tuberculosis (strain CDC 1551 / Oshkosh).